Consider the following 968-residue polypeptide: Glycine dehydrogenase (decarboxylating) (968 aa).

At K717 the chain carries N6-(pyridoxal phosphate)lysine.

This sequence belongs to the GcvP family. As to quaternary structure, the glycine cleavage system is composed of four proteins: P, T, L and H. It depends on pyridoxal 5'-phosphate as a cofactor.

It carries out the reaction N(6)-[(R)-lipoyl]-L-lysyl-[glycine-cleavage complex H protein] + glycine + H(+) = N(6)-[(R)-S(8)-aminomethyldihydrolipoyl]-L-lysyl-[glycine-cleavage complex H protein] + CO2. Its function is as follows. The glycine cleavage system catalyzes the degradation of glycine. The P protein binds the alpha-amino group of glycine through its pyridoxal phosphate cofactor; CO(2) is released and the remaining methylamine moiety is then transferred to the lipoamide cofactor of the H protein. This chain is Glycine dehydrogenase (decarboxylating), found in Tropheryma whipplei (strain TW08/27) (Whipple's bacillus).